A 441-amino-acid polypeptide reads, in one-letter code: POC1 centriolar protein homolog A (441 aa).

WD repeat units follow at residues 16-55 (GHRDTVTTVDFNPNTKQLASGSMDSCLMIWNMKPQMRAYR), 58-97 (GHKDAILSVDFSPSGHLIASASRDKTVRLWVPSVKGESTV), 100-139 (AHTGTVRSVSFSGDGQSLVTASDDKTIKVWTVHRQKFLFS), 142-181 (QHINWVRCAKFSPDGRLIVSASDDKTIKLWDKTSRECIHS), 184-223 (EHGGFVNFVDFHPSGTCIAAAATDNTVKVWDIRMNKLIQH), 226-265 (VHSGVVNSLSFHPSGNYLITASNDSTLKVLDLLEGRLLYT), and 268-307 (GHQGPVTSVKFSREGEFFASGGSDEQVMVWKTNFDSASYA). Positions 323–380 (DYTSGVPAADRHRPERNAQTDQADDLEPRHIQMSAKDRSSPLSYTSRSIDQHHPQAED) are disordered. 3 stretches are compositionally biased toward basic and acidic residues: residues 331–340 (ADRHRPERNA), 348–361 (LEPRHIQMSAKDRS), and 371–380 (IDQHHPQAED). A coiled-coil region spans residues 400 to 427 (LTRTVGILEQRLSLTEDKLKECIDNQQA).

The protein belongs to the WD repeat POC1 family. Interacts with pat.

The protein resides in the cytoplasm. Its subcellular location is the cytoskeleton. May play an important role in centriole assembly and/or stability and ciliogenesis. In Xenopus tropicalis (Western clawed frog), this protein is POC1 centriolar protein homolog A (poc1a).